We begin with the raw amino-acid sequence, 211 residues long: Adenylyl-sulfate kinase (211 aa).

ATP is bound at residue 36 to 43 (GLSGSGKS). The active-site Phosphoserine intermediate is S110.

Belongs to the APS kinase family.

The enzyme catalyses adenosine 5'-phosphosulfate + ATP = 3'-phosphoadenylyl sulfate + ADP + H(+). It functions in the pathway sulfur metabolism; hydrogen sulfide biosynthesis; sulfite from sulfate: step 2/3. Its function is as follows. Catalyzes the synthesis of activated sulfate. The chain is Adenylyl-sulfate kinase (cysC) from Buchnera aphidicola subsp. Schizaphis graminum (strain Sg).